Reading from the N-terminus, the 271-residue chain is Phosphatidylinositol transfer protein beta isoform (271 aa).

K215 bears the N6-acetyllysine mark. A Phosphoserine modification is found at S262.

It belongs to the PtdIns transfer protein family. PI transfer class I subfamily. In terms of processing, constitutive phosphorylation of Ser-262 has no effect on phospholipid transfer activity but is required for Golgi targeting. Expressed abundantly in brain, kidney, liver, and lung, but in a lesser amount in testis.

The protein resides in the golgi apparatus. It is found in the golgi apparatus membrane. It localises to the endoplasmic reticulum membrane. It carries out the reaction a 1,2-diacyl-sn-glycero-3-phosphocholine(in) = a 1,2-diacyl-sn-glycero-3-phosphocholine(out). The catalysed reaction is a 1,2-diacyl-sn-glycero-3-phospho-(1D-myo-inositol)(in) = a 1,2-diacyl-sn-glycero-3-phospho-(1D-myo-inositol)(out). The enzyme catalyses an N-(acyl)-sphingosylphosphocholine(in) = an N-(acyl)-sphingosylphosphocholine(out). With respect to regulation, phosphatidylinositol transfer activity is inhibited by N-ethylmaleimide. Functionally, catalyzes the transfer of phosphatidylinositol between membranes. Also catalyzes the transfer of phosphatidylcholine and sphingomyelin between membranes. Required for COPI-mediated retrograde transport from the Golgi to the endoplasmic reticulum; phosphatidylinositol and phosphatidylcholine transfer activity is essential for this function. The chain is Phosphatidylinositol transfer protein beta isoform (Pitpnb) from Rattus norvegicus (Rat).